Here is a 338-residue protein sequence, read N- to C-terminus: MNTRPFYFGLIFIAIIAVLANYLGSTDFSHHYHISALIIAILLGMAIGNTIYPQFSSQVEKGVLFAKGTLLRAGIVLYGFRLTFGDIADVGLNAVVTDAIMLISTFFLTALLGIRYLKMDKQLVYLTGAGCSICGAAAVMAAEPVTKAESHKVSVAIAVVVIFGTLSIFTYPFFYTWSQHLINAHQFGIYVGSSVHEVAQVYAIGGNIDPIVANTAVITKMLRVMMLAPFLFMLSWLLTRSDGISENTSHKITIPWFAVLFIGVAIFNSFDLLPKELVKLFVEIDSFLLISAMAALGLTTQASAIKKAGLKPLVLGVLIYLWLVIGGFLVNYGISKLI.

Helical transmembrane passes span 5–23, 33–55, 62–84, 94–116, 123–145, 155–177, 222–239, 254–273, 280–302, and 312–334; these read PFYF…ANYL, HISA…YPQF, GVLF…RLTF, AVVT…GIRY, LVYL…AEPV, VAIA…FYTW, LRVM…WLLT, IPWF…FDLL, LFVE…TTQA, and PLVL…NYGI.

This sequence belongs to the UPF0324 family.

It localises to the cell membrane. This is UPF0324 membrane protein HI_1643 from Haemophilus influenzae (strain ATCC 51907 / DSM 11121 / KW20 / Rd).